Consider the following 311-residue polypeptide: Syntaxin-111 (311 aa).

The Cytoplasmic segment spans residues 1-284 (MNDLMTKSFM…AREHQRSSRK (284 aa)). Positions 213 to 275 (VHEIQDRHDA…QGGNKELRKA (63 aa)) constitute a t-SNARE coiled-coil homology domain. The chain crosses the membrane as a helical; Anchor for type IV membrane protein span at residues 285–305 (WLCIGIIILLLLVLLVIVPIA). At 306–311 (TSFKRS) the chain is on the vesicular side.

The protein belongs to the syntaxin family. Expressed in roots and panicles.

It is found in the cell membrane. The protein resides in the cytoplasm. Functionally, vesicle trafficking protein that functions in the secretory pathway. This Oryza sativa subsp. japonica (Rice) protein is Syntaxin-111.